Consider the following 110-residue polypeptide: G antigen 2E (110 aa).

Positions 1–110 are disordered; that stretch reads MSWRGRSTYY…NPEEVKTPEE (110 aa). Acidic residues-rich tracts occupy residues 32 to 45 and 87 to 96; these read FSDE…EEGE and ECEDGPDGQE.

This sequence belongs to the GAGE family.

The sequence is that of G antigen 2E (GAGE2E) from Homo sapiens (Human).